Consider the following 431-residue polypeptide: Enolase (431 aa).

Position 167 (Gln-167) interacts with (2R)-2-phosphoglycerate. Residue Glu-209 is the Proton donor of the active site. Mg(2+) is bound by residues Asp-246, Glu-289, and Asp-316. Residues Lys-341, Arg-370, Ser-371, and Lys-392 each contribute to the (2R)-2-phosphoglycerate site. Catalysis depends on Lys-341, which acts as the Proton acceptor.

It belongs to the enolase family. In terms of assembly, component of the RNA degradosome, a multiprotein complex involved in RNA processing and mRNA degradation. Requires Mg(2+) as cofactor.

It localises to the cytoplasm. Its subcellular location is the secreted. The protein resides in the cell surface. The enzyme catalyses (2R)-2-phosphoglycerate = phosphoenolpyruvate + H2O. The protein operates within carbohydrate degradation; glycolysis; pyruvate from D-glyceraldehyde 3-phosphate: step 4/5. Catalyzes the reversible conversion of 2-phosphoglycerate (2-PG) into phosphoenolpyruvate (PEP). It is essential for the degradation of carbohydrates via glycolysis. This chain is Enolase, found in Shewanella loihica (strain ATCC BAA-1088 / PV-4).